A 193-amino-acid polypeptide reads, in one-letter code: Large ribosomal subunit protein eL18 (193 aa).

A disordered region spans residues 158 to 193 (HFGAAGVPGSHAKPHVSSRGKERQRSSKRRHAFRHK). Residues 183–193 (SSKRRHAFRHK) are compositionally biased toward basic residues.

This sequence belongs to the eukaryotic ribosomal protein eL18 family.

It localises to the cytoplasm. In Trypanosoma brucei brucei (strain 927/4 GUTat10.1), this protein is Large ribosomal subunit protein eL18 (RPL18-A).